A 120-amino-acid chain; its full sequence is C-C motif chemokine 27 (120 aa).

The first 25 residues, 1-25, serve as a signal peptide directing secretion; it reads MMEGLSPASSLPLLLLLLSPAPEAA. Intrachain disulfides connect C34-C63 and C35-C78.

This sequence belongs to the intercrine beta (chemokine CC) family. Monomer, dimer, and tetramer. Heparin avidly promotes oligomerization. Interacts with TNFAIP6 (via Link domain). As to expression, isoform 1 is predominantly expressed in placenta and weakly in skin. Isoform 2 is predominantly expressed in testes and brain, weakly in kidney and liver and even lower in heart and muscle. Low expression of both isoforms in other tissues.

The protein resides in the secreted. It is found in the nucleus. Functionally, chemotactic factor that attracts skin-associated memory T-lymphocytes. May play a role in mediating homing of lymphocytes to cutaneous sites. May play a role in cell migration during embryogenesis. Nuclear forms may facilitate cellular migration by inducing cytoskeletal relaxation. Binds to CCR10. This is C-C motif chemokine 27 (Ccl27) from Mus musculus (Mouse).